Consider the following 448-residue polypeptide: Methylenetetrahydrofolate--tRNA-(uracil-5-)-methyltransferase TrmFO (448 aa).

10-15 (GAGLAG) is a binding site for FAD.

It belongs to the MnmG family. TrmFO subfamily. It depends on FAD as a cofactor.

It is found in the cytoplasm. The catalysed reaction is uridine(54) in tRNA + (6R)-5,10-methylene-5,6,7,8-tetrahydrofolate + NADH + H(+) = 5-methyluridine(54) in tRNA + (6S)-5,6,7,8-tetrahydrofolate + NAD(+). It catalyses the reaction uridine(54) in tRNA + (6R)-5,10-methylene-5,6,7,8-tetrahydrofolate + NADPH + H(+) = 5-methyluridine(54) in tRNA + (6S)-5,6,7,8-tetrahydrofolate + NADP(+). Functionally, catalyzes the folate-dependent formation of 5-methyl-uridine at position 54 (M-5-U54) in all tRNAs. This is Methylenetetrahydrofolate--tRNA-(uracil-5-)-methyltransferase TrmFO from Lactococcus lactis subsp. cremoris (strain MG1363).